The primary structure comprises 99 residues: Carboxysome shell vertex protein CcmL (99 aa).

The region spanning 1-83 (MKIARVCGTV…IDAAVVAIID (83 aa)) is the BMV domain.

The protein belongs to the CcmL/EutN family. CcmL subfamily. Homopentamer. May interact with CcmK2, this occurs at very high CcmK2 concentrations. Interacts with full-length CcmM.

It localises to the carboxysome. Its function is as follows. Probably forms vertices in the carboxysome, a polyhedral inclusion where RuBisCO (ribulose bisphosphate carboxylase, rbcL-rbcS) is sequestered. Has been modeled to induce curvature upon insertion into an otherwise flat hexagonal molecular layer of CcmK subunits. The sequence is that of Carboxysome shell vertex protein CcmL from Thermosynechococcus vestitus (strain NIES-2133 / IAM M-273 / BP-1).